Consider the following 338-residue polypeptide: Ketol-acid reductoisomerase (NADP(+)) (338 aa).

In terms of domain architecture, KARI N-terminal Rossmann spans 1–181 (MKVFYDKDAD…GGGRAGIIET (181 aa)). Residues 24–27 (YGSQ), Arg-47, and Ser-52 contribute to the NADP(+) site. His-107 is a catalytic residue. Gly-133 serves as a coordination point for NADP(+). In terms of domain architecture, KARI C-terminal knotted spans 182–327 (NFREETETDL…AKLRAMMPWI (146 aa)). The Mg(2+) site is built by Asp-190, Glu-194, Glu-226, and Glu-230. Ser-251 is a substrate binding site.

Belongs to the ketol-acid reductoisomerase family. Mg(2+) serves as cofactor.

It catalyses the reaction (2R)-2,3-dihydroxy-3-methylbutanoate + NADP(+) = (2S)-2-acetolactate + NADPH + H(+). It carries out the reaction (2R,3R)-2,3-dihydroxy-3-methylpentanoate + NADP(+) = (S)-2-ethyl-2-hydroxy-3-oxobutanoate + NADPH + H(+). Its pathway is amino-acid biosynthesis; L-isoleucine biosynthesis; L-isoleucine from 2-oxobutanoate: step 2/4. The protein operates within amino-acid biosynthesis; L-valine biosynthesis; L-valine from pyruvate: step 2/4. Its function is as follows. Involved in the biosynthesis of branched-chain amino acids (BCAA). Catalyzes an alkyl-migration followed by a ketol-acid reduction of (S)-2-acetolactate (S2AL) to yield (R)-2,3-dihydroxy-isovalerate. In the isomerase reaction, S2AL is rearranged via a Mg-dependent methyl migration to produce 3-hydroxy-3-methyl-2-ketobutyrate (HMKB). In the reductase reaction, this 2-ketoacid undergoes a metal-dependent reduction by NADPH to yield (R)-2,3-dihydroxy-isovalerate. This Ralstonia nicotianae (strain ATCC BAA-1114 / GMI1000) (Ralstonia solanacearum) protein is Ketol-acid reductoisomerase (NADP(+)).